The chain runs to 673 residues: G-protein-signaling modulator 1 (673 aa).

A mediates association with membranes region spans residues 1–507; it reads MASPAPPVAE…DLLSKFQSSR (507 aa). TPR repeat units lie at residues 28-61, 66-99, 106-139, 146-178, 180-199, 206-239, 246-279, 286-319, and 326-359; these read CLEL…GTED, SAIY…ARTI, AKAS…AQEQ, ARAL…PPDV, ETLH…VKEL, GRAY…AKEF, RRAY…SRQL, AQAC…AQEL, and GRAC…SQEI. The interval 361–485 is interaction with STK11/LKB1; the sequence is DRNGELTARM…VRVQVPRTGI (125 aa). Phosphoserine is present on Ser-410. An Omega-N-methylarginine modification is found at Arg-418. Basic and acidic residues predominate over residues 420–439; sequence PLDREQNGETHHTGDWRGPG. Residues 420–475 are disordered; that stretch reads PLDREQNGETHHTGDWRGPGRDSLPLPMRSRKYQEGPDAIERRPREGSHSPLDSAD. Ser-442, Ser-467, Ser-469, Ser-490, and Ser-491 each carry phosphoserine. A compositionally biased stretch (basic and acidic residues) spans 451–467; the sequence is KYQEGPDAIERRPREGS. In terms of domain architecture, GoLoco 1 spans 493–515; sequence EECFFDLLSKFQSSRMDDQRCPL. The tract at residues 508–531 is disordered; the sequence is MDDQRCPLEEGQAGAAEATAAPSV. The segment covering 516–528 has biased composition (low complexity); that stretch reads EEGQAGAAEATAA. A phosphoserine mark is found at Ser-543 and Ser-567. GoLoco domains are found at residues 546–568, 594–616, and 628–650; these read TEEF…RASV, GDEF…RCPP, and DEDF…RVDL. The disordered stretch occupies residues 644–673; that stretch reads DEQRVDLAGSPEQEASGLPDPQQQCPPGAS. Ser-653 bears the Phosphoserine mark. The segment covering 664–673 has biased composition (polar residues); the sequence is PQQQCPPGAS.

Belongs to the GPSM family. In terms of assembly, interacts with GNAI1 and GNAI2 preferentially in their GDP-bound state. May also interact with GNAO1. Interacts with INSC/inscuteable and FRMPD1. Interacts with GNAI3. Interacts with STK11/LKB1 and MACF1. Phosphorylation regulates interaction with G(i/o) alpha. In terms of tissue distribution, expressed in neural progenitor cells (at protein level).

Its subcellular location is the cytoplasm. The protein resides in the cytosol. The protein localises to the endoplasmic reticulum membrane. It localises to the golgi apparatus membrane. It is found in the cell membrane. Functionally, guanine nucleotide dissociation inhibitor (GDI) which functions as a receptor-independent activator of heterotrimeric G-protein signaling. Keeps G(i/o) alpha subunit in its GDP-bound form thus uncoupling heterotrimeric G-proteins signaling from G protein-coupled receptors. Controls spindle orientation and asymmetric cell fate of cerebral cortical progenitors. May also be involved in macroautophagy in intestinal cells. May play a role in drug addiction. The sequence is that of G-protein-signaling modulator 1 (Gpsm1) from Mus musculus (Mouse).